The following is a 353-amino-acid chain: Photosystem II D2 protein (353 aa).

Thr-2 carries the N-acetylthreonine modification. The residue at position 2 (Thr-2) is a Phosphothreonine. The helical transmembrane segment at 41–61 (CAYFALGGWFTGTTFVTSWYT) threads the bilayer. Residue His-118 participates in chlorophyll a binding. The helical transmembrane segment at 125–141 (GFMLRQFELARSVQLRP) threads the bilayer. Positions 130 and 143 each coordinate pheophytin a. Residues 153-166 (VFVSVFLIYPLGQS) form a helical membrane-spanning segment. Residue His-198 participates in chlorophyll a binding. Residues 208 to 228 (AALLCAIHGATVENTLFEDGD) form a helical membrane-spanning segment. Positions 215 and 262 each coordinate a plastoquinone. A Fe cation-binding site is contributed by His-215. His-269 lines the Fe cation pocket. The chain crosses the membrane as a helical span at residues 279–295 (GLWMSALGVVGLALNLR).

Belongs to the reaction center PufL/M/PsbA/D family. PSII is composed of 1 copy each of membrane proteins PsbA, PsbB, PsbC, PsbD, PsbE, PsbF, PsbH, PsbI, PsbJ, PsbK, PsbL, PsbM, PsbT, PsbX, PsbY, PsbZ, Psb30/Ycf12, at least 3 peripheral proteins of the oxygen-evolving complex and a large number of cofactors. It forms dimeric complexes. Requires The D1/D2 heterodimer binds P680, chlorophylls that are the primary electron donor of PSII, and subsequent electron acceptors. It shares a non-heme iron and each subunit binds pheophytin, quinone, additional chlorophylls, carotenoids and lipids. There is also a Cl(-1) ion associated with D1 and D2, which is required for oxygen evolution. The PSII complex binds additional chlorophylls, carotenoids and specific lipids. as cofactor.

The protein localises to the plastid. Its subcellular location is the chloroplast thylakoid membrane. The enzyme catalyses 2 a plastoquinone + 4 hnu + 2 H2O = 2 a plastoquinol + O2. Functionally, photosystem II (PSII) is a light-driven water:plastoquinone oxidoreductase that uses light energy to abstract electrons from H(2)O, generating O(2) and a proton gradient subsequently used for ATP formation. It consists of a core antenna complex that captures photons, and an electron transfer chain that converts photonic excitation into a charge separation. The D1/D2 (PsbA/PsbD) reaction center heterodimer binds P680, the primary electron donor of PSII as well as several subsequent electron acceptors. D2 is needed for assembly of a stable PSII complex. In Amborella trichopoda, this protein is Photosystem II D2 protein.